The following is a 572-amino-acid chain: Mitochondrial distribution and morphology protein 34 (572 aa).

One can recognise an SMP-LTD domain in the interval 1-195; sequence MAFNFNWSPL…LPAIIHRLSL (195 aa). Disordered regions lie at residues 212-236, 355-426, 487-507, and 552-572; these read TASA…VDAL, GAGR…PDND, HGAS…GSSR, and ACGP…AYGH. A compositionally biased stretch (basic residues) spans 358 to 370; it reads RHSKAHARKRKKR. Residues 371–381 are compositionally biased toward basic and acidic residues; that stretch reads VVDLRRPKTTD. Residues 387 to 400 are compositionally biased toward polar residues; sequence SDESSFTESTSAPS.

The protein belongs to the MDM34 family. As to quaternary structure, component of the ER-mitochondria encounter structure (ERMES) or MDM complex, composed of mmm1, mdm10, mdm12 and mdm34.

The protein localises to the mitochondrion outer membrane. Functionally, component of the ERMES/MDM complex, which serves as a molecular tether to connect the endoplasmic reticulum (ER) and mitochondria. Components of this complex are involved in the control of mitochondrial shape and protein biogenesis, and function in nonvesicular lipid trafficking between the ER and mitochondria. Mdm34 is required for the interaction of the ER-resident membrane protein mmm1 and the outer mitochondrial membrane-resident beta-barrel protein mdm10. This Aspergillus fumigatus (strain ATCC MYA-4609 / CBS 101355 / FGSC A1100 / Af293) (Neosartorya fumigata) protein is Mitochondrial distribution and morphology protein 34.